Here is a 339-residue protein sequence, read N- to C-terminus: MLNDRARILLKTLVERYISEGEPVGSRTLSKHAGLDLSPASIRNIMSDLEEMGFVASPHTSAGRVPTPRGYRFFVDTLLTVRPLDQVSVNHLENSLAASDPQRLMTAASTLLSDLSQFAGLVMTPRRNPAFRQIEFLTLSDKRVLLIIVTMEGEVENRVIVTEQSYSAAALTEAANYFNQNFAGHSFDHVRSKLRDELGRMRDDITRLMAAAVDAGTQALDASQDNVVVSGSRKLLDVEELSSNMRSLRRLFDAFEKKTGLLQLLDQSRSAAGVQIFIGGESELLPLDECSLVTAPYSVDGVVVGTLGVVGPTRMAYERVVPIVDVTAKILSSALSQHK.

Belongs to the HrcA family.

Its function is as follows. Negative regulator of class I heat shock genes (grpE-dnaK-dnaJ and groELS operons). Prevents heat-shock induction of these operons. This chain is Heat-inducible transcription repressor HrcA, found in Thiobacillus denitrificans (strain ATCC 25259 / T1).